Reading from the N-terminus, the 204-residue chain is MECVFGLVGNGFAIVAADTSAVHSILLHKNNEDKIMVLDSHKLVAASGEPGDRVQFTEYVQKNVSLYKFRNGIPLTTAAAANFTRGELATALRKNPYSVNILMAGYDDESGASLYYIDYIATLHKVDKGAFGYGSYFSLSTMDRHYRSDMSVEEAIELVDKCILEIRSRLVVAPPNFVIKIVDKDGARDYAWRQSVKDVTTAVV.

Met-1 carries the N-acetylmethionine modification.

The protein belongs to the peptidase T1B family. In terms of assembly, component of the 20S core complex of the 26S proteasome. The 26S proteasome is composed of a core protease (CP), known as the 20S proteasome, capped at one or both ends by the 19S regulatory particle (RP/PA700). The 20S proteasome core is composed of 28 subunits that are arranged in four stacked rings, resulting in a barrel-shaped structure. The two end rings are each formed by seven alpha subunits, and the two central rings are each formed by seven beta subunits. The catalytic chamber with the active sites is on the inside of the barrel.

It is found in the cytoplasm. The protein localises to the nucleus. Functionally, non-catalytic component of the proteasome, a multicatalytic proteinase complex which is characterized by its ability to cleave peptides with Arg, Phe, Tyr, Leu, and Glu adjacent to the leaving group at neutral or slightly basic pH. The proteasome has an ATP-dependent proteolytic activity. This Arabidopsis thaliana (Mouse-ear cress) protein is Proteasome subunit beta type-2-A (PBD1).